The following is a 608-amino-acid chain: Bifunctional lycopene cyclase/phytoene synthase (608 aa).

The interval 1-240 is lycopene beta-cyclase; the sequence is MSILTYLEFH…LVFATCAIDR (240 aa). 7 helical membrane-spanning segments follow: residues 3-23, 37-56, 80-97, 117-137, 150-170, 175-195, and 218-238; these read ILTY…ALCW, YKFL…NYIV, YMFF…SNFV, LLVR…AWHL, ILWY…EYIL, AVLL…IVAI, and VEEC…TCAI. The interval 247–608 is phytoene synthase; it reads LYKSSVQNQN…ARKIKSFFVD (362 aa).

It in the N-terminal section; belongs to the lycopene beta-cyclase family. In the C-terminal section; belongs to the phytoene/squalene synthase family.

It is found in the membrane. It carries out the reaction all-trans-lycopene = gamma-carotene. The catalysed reaction is gamma-carotene = all-trans-beta-carotene. It catalyses the reaction 2 (2E,6E,10E)-geranylgeranyl diphosphate = 15-cis-phytoene + 2 diphosphate. It participates in carotenoid biosynthesis; beta-carotene biosynthesis. Its pathway is carotenoid biosynthesis; phytoene biosynthesis; all-trans-phytoene from geranylgeranyl diphosphate: step 1/1. Its function is as follows. Bifunctional enzyme that catalyzes the reactions from geranylgeranyl diphosphate to phytoene (phytoene synthase) and lycopene to beta-carotene via the intermediate gamma-carotene (lycopene cyclase). In Blakeslea trispora (Choanephora trispora), this protein is Bifunctional lycopene cyclase/phytoene synthase.